The primary structure comprises 84 residues: Beta/gamma-crystallin (84 aa).

2 consecutive Beta/gamma crystallin 'Greek key' domains span residues 2-42 (GKII…IVES) and 43-84 (GTWF…VKQQ). The interval 64 to 84 (KYPNPGSWGGNDDELSSVKQQ) is disordered.

It belongs to the beta/gamma-crystallin family. As to quaternary structure, monomer. In terms of tissue distribution, palps of larvae and otolith of the light-sensing ocellus.

In terms of biological role, structural component of the neuroectodermal visual system. The protein is Beta/gamma-crystallin of Ciona intestinalis (Transparent sea squirt).